The primary structure comprises 302 residues: Deoxyhypusine hydroxylase-B (302 aa).

HEAT-like PBS-type repeat units lie at residues 49–75 (LAHEAAFALGQMQDAEAIPALEAVLKD), 82–108 (VRHEAAEALGAIGLEKSISLLEESLAV), 171–200 (MYERYAALFALRNDSGDAAVSAIVAALGVK), 204–230 (LRHEVAYVLGQLQNKAASDALSTVLKN), and 237–263 (VRHEAAEALGSIADQESIALLEEFAKD). Fe cation-binding residues include H51, E52, H84, and E85. Fe cation is bound by residues H206, E207, H239, and E240.

The protein belongs to the deoxyhypusine hydroxylase family. Requires Fe(2+) as cofactor.

It catalyses the reaction [eIF5A protein]-deoxyhypusine + AH2 + O2 = [eIF5A protein]-hypusine + A + H2O. The protein operates within protein modification; eIF5A hypusination. In terms of biological role, catalyzes the hydroxylation of the N(6)-(4-aminobutyl)-L-lysine intermediate to form hypusine, an essential post-translational modification only found in mature eIF-5A factor. The protein is Deoxyhypusine hydroxylase-B of Oryza sativa subsp. japonica (Rice).